Here is a 122-residue protein sequence, read N- to C-terminus: Large ribosomal subunit protein uL14c (122 aa).

Belongs to the universal ribosomal protein uL14 family. Part of the 50S ribosomal subunit.

The protein localises to the plastid. It localises to the chloroplast. Binds to 23S rRNA. In Gossypium barbadense (Sea Island cotton), this protein is Large ribosomal subunit protein uL14c.